A 421-amino-acid chain; its full sequence is Fumarylacetoacetase (421 aa).

Asp131 is a binding site for Ca(2+). His138 functions as the Proton acceptor in the catalytic mechanism. A substrate-binding site is contributed by Arg147. Ca(2+)-binding residues include Glu204, Glu206, and Asp238. Residue Asp238 participates in Mg(2+) binding. 2 residues coordinate substrate: Gln245 and Tyr249. Mg(2+)-binding residues include Lys258 and Thr262. Residue Thr355 coordinates substrate.

This sequence belongs to the FAH family. Requires Ca(2+) as cofactor. The cofactor is Mg(2+).

It catalyses the reaction 4-fumarylacetoacetate + H2O = acetoacetate + fumarate + H(+). It functions in the pathway amino-acid degradation; L-phenylalanine degradation; acetoacetate and fumarate from L-phenylalanine: step 6/6. Its function is as follows. Converts fumarylacetoacetate to acetoacetate and fumarate. Involved in tyrosine catabolic pathway. Catalyzes the final step in the tyrosine degradation pathway. The chain is Fumarylacetoacetase from Arabidopsis thaliana (Mouse-ear cress).